We begin with the raw amino-acid sequence, 268 residues long: MVSLTTYCLKNIVNQHAHVENTVLLYHLGLRWNCKTLYQCIQCNGVNYINSHSDQCKNKDLFLMKVIVKKNLAVARTLLSWGASPEYARLFCRNAEEEQALNLQHVADIPSSKILERLTMSYKENDEQLLITFYLLNLSTKFSTNLHEQVRFNIVSYIICDLAIHQTFKTFYAKNYSLSTLYCIFLAIYYKLYMALRKMVKIYPGLKPFAYLIGFMFDDETVTQTYSSTDDEILECKNKIIVIKGCYGNIHCRSDIDHMYAFSQNNFW.

Topologically, residues 1 to 175 (MVSLTTYCLK…QTFKTFYAKN (175 aa)) are cytoplasmic. The helical transmembrane segment at 176–193 (YSLSTLYCIFLAIYYKLY) threads the bilayer. Topologically, residues 194–268 (MALRKMVKIY…MYAFSQNNFW (75 aa)) are extracellular.

This sequence belongs to the asfivirus MGF 300 family.

The protein localises to the host membrane. In terms of biological role, plays a role in virus cell tropism, and may be required for efficient virus replication in macrophages. This African swine fever virus (isolate Tick/Malawi/Lil 20-1/1983) (ASFV) protein is Protein MGF 300-1L.